Reading from the N-terminus, the 3414-residue chain is Hemocyanin 1 (3414 aa).

The first 16 residues, 1 to 16 (MLSVRLLIVVLALANA), serve as a signal peptide directing secretion. E17 contributes to the a divalent metal cation binding site. Positions 17–437 (ENLVRKSVEH…PPVKHHQSAN (421 aa)) are functional unit a (wall). Residue H58 coordinates Cu cation. Residues C64 and C73 are joined by a disulfide bond. The segment at residues 74 to 76 (CIH) is a cross-link (2'-(S-cysteinyl)-histidine (Cys-His)). Residues H76, H85, H195, H199, and H226 each contribute to the Cu cation site. Residues C185 and C252 are joined by a disulfide bond. Residues 287–290 (CELH) constitute a cross-link (2'-(S-cysteinyl)-histidine (Cys-His)). C339 and C351 are disulfide-bonded. N403 carries an N-linked (GlcNAc...) asparagine glycan. A functional unit b (wall) region spans residues 438-851 (LLVRKNINDL…RVKFDKVPRS (414 aa)). H478 is a binding site for Cu cation. C484 and C495 are oxidised to a cystine. A cross-link (2'-(S-cysteinyl)-histidine (Cys-His)) is located at residues 496-498 (CVH). H498 and H507 together coordinate Cu cation. A glycan (N-linked (GlcNAc...) asparagine) is linked at N545. C608 and C674 form a disulfide bridge. The Cu cation site is built by H618, H622, and H649. The WD 1 repeat unit spans residues 628–669 (SEHFSMSSLHYTAFDPLFYFHHSNVDRLWAVWQALQMRRHKP). E737 is an a divalent metal cation binding site. The segment at 852–1271 (RLIRKNVDRL…EVYQAEVTSA (420 aa)) is functional unit c (wall). H892 provides a ligand contact to Cu cation. C898 and C909 form a disulfide bridge. Positions 910–912 (CVH) form a cross-link, 2'-(S-cysteinyl)-histidine (Cys-His). The Cu cation site is built by H912, H921, H1031, H1035, and H1062. Cystine bridges form between C1021–C1088 and C1178–C1184. A WD 2 repeat occupies 1041–1082 (AQPYGMASLRYTAFDPLFYLHHSNTDRIWAIWQALQKYRGKP). The functional unit d (wall) stretch occupies residues 1272–1680 (NRIRKNIENL…AHTDDGHTEP (409 aa)). H1309 provides a ligand contact to Cu cation. C1315 and C1324 are oxidised to a cystine. The 2'-(S-cysteinyl)-histidine (Cys-His) cross-link spans 1325 to 1327 (CVH). The Cu cation site is built by H1327, H1336, H1440, H1444, and H1471. 2 cysteine pairs are disulfide-bonded: C1430–C1497 and C1585–C1595. A WD 3 repeat occupies 1450–1491 (KGKYSMSNLDYAAFDPVFFLHHATTDRIWAIWQDLQRFRKRP). N1648 carries an N-linked (GlcNAc...) asparagine glycan. The functional unit e (wall) stretch occupies residues 1681-2097 (VMIRKDITQL…HDISSHHLSL (417 aa)). H1721 contacts Cu cation. A disulfide bond links C1727 and C1738. A cross-link (2'-(S-cysteinyl)-histidine (Cys-His)) is located at residues 1739 to 1741 (CVH). Residues H1741, H1750, H1863, H1867, and H1894 each coordinate Cu cation. 2 disulfides stabilise this stretch: C1853/C1920 and C2009/C2015. A WD 4 repeat occupies 1873-1914 (KEPYGIGHLHYASYDPLFYIHHSQTDRIWAIWQSLQRFRGLS). Residues 2098 to 2517 (NKVRHDLSTL…EDHHSSSMAG (420 aa)) are functional unit f (wall). H2138 serves as a coordination point for Cu cation. A disulfide bridge links C2144 with C2154. N2145 is a glycosylation site (N-linked (GlcNAc...) asparagine). Residues 2155-2157 (CIH) constitute a cross-link (2'-(S-cysteinyl)-histidine (Cys-His)). Residues H2157, H2166, H2276, H2280, and H2307 each contribute to the Cu cation site. The WD 5 repeat unit spans residues 2163–2199 (PHWHRLYTLQFEQALRRHGSSVAVPYWDWTKPIHNIP). 2 cysteine pairs are disulfide-bonded: C2266-C2333 and C2420-C2426. E2424 provides a ligand contact to a divalent metal cation. Residues 2518–2921 (HGVRKEINTL…EKHHEDHHED (404 aa)) form a functional unit g (internal arc) region. H2558 contacts Cu cation. An intrachain disulfide couples C2564 to C2574. N2571 carries N-linked (GlcNAc...) asparagine glycosylation. Residues 2575–2577 (CTH) constitute a cross-link (2'-(S-cysteinyl)-histidine (Cys-His)). Residues H2577, H2586, H2686, H2690, and H2717 each coordinate Cu cation. Intrachain disulfides connect C2676/C2743 and C2830/C2836. The WD 6 repeat unit spans residues 2696-2737 (LTPYGMSTLEYTTYDPLFWLHHANTDRIWAIWQALQEYRGLP). A functional unit h (internal slab) region spans residues 2922 to 3414 (ILVRKNIHSL…LRIHVHVDDE (493 aa)). H2962 contacts Cu cation. A disulfide bridge connects residues C2968 and C2978. The 2'-(S-cysteinyl)-histidine (Cys-His) cross-link spans 2979–2981 (CVH). The Cu cation site is built by H2981, H2990, H3091, H3095, and H3122. Cysteines 3081 and 3148 form a disulfide. A WD 7 repeat occupies 3101–3142 (AEKYSMSTLEYSAFDPYFMIHHASLDKIWIIWQELQKRRVKP). N-linked (GlcNAc...) asparagine glycosylation occurs at N3278. C3367 and C3400 form a disulfide bridge.

The protein belongs to the tyrosinase family. Hemocyanin subfamily. Homo-didecamer, with two decamers assembled face-to-face at their open ends. This didecamer form a stable 25 nM cylinder wall. In terms of processing, probably N-glycosylated. Asn-1280 and Asn-2484 are buried deeply in the protein which make them inaccessible for sugar attachment. Asn-3278 N-glycan is likely to represent a diantennate carbohydrate tree. The didecamer is almost evenly tagged by a total of 120 sugar trees. In terms of tissue distribution, hemolymph.

Its subcellular location is the secreted. It is found in the extracellular space. In terms of biological role, hemocyanins are copper-containing oxygen carriers occurring freely dissolved in the hemolymph of many mollusks and arthropods. This chain is Hemocyanin 1, found in Megathura crenulata (Giant keyhole limpet).